The following is a 360-amino-acid chain: Phospho-N-acetylmuramoyl-pentapeptide-transferase (360 aa).

The next 10 helical transmembrane spans lie at 27–47, 73–93, 98–118, 134–154, 168–188, 199–219, 239–259, 263–283, 288–308, and 337–357; these read GAVM…IEWL, TMGG…WADL, VWAV…DDYL, LVAQ…LGQG, LTFN…VGAS, GLAI…AYLV, LAVF…FNAP, VFMG…VSVV, IVLA…IVQV, and TVVI…LSTL.

Belongs to the glycosyltransferase 4 family. MraY subfamily. Requires Mg(2+) as cofactor.

The protein localises to the cell inner membrane. The catalysed reaction is UDP-N-acetyl-alpha-D-muramoyl-L-alanyl-gamma-D-glutamyl-meso-2,6-diaminopimeloyl-D-alanyl-D-alanine + di-trans,octa-cis-undecaprenyl phosphate = di-trans,octa-cis-undecaprenyl diphospho-N-acetyl-alpha-D-muramoyl-L-alanyl-D-glutamyl-meso-2,6-diaminopimeloyl-D-alanyl-D-alanine + UMP. It functions in the pathway cell wall biogenesis; peptidoglycan biosynthesis. In terms of biological role, catalyzes the initial step of the lipid cycle reactions in the biosynthesis of the cell wall peptidoglycan: transfers peptidoglycan precursor phospho-MurNAc-pentapeptide from UDP-MurNAc-pentapeptide onto the lipid carrier undecaprenyl phosphate, yielding undecaprenyl-pyrophosphoryl-MurNAc-pentapeptide, known as lipid I. In Rhodospirillum rubrum (strain ATCC 11170 / ATH 1.1.1 / DSM 467 / LMG 4362 / NCIMB 8255 / S1), this protein is Phospho-N-acetylmuramoyl-pentapeptide-transferase.